Here is a 211-residue protein sequence, read N- to C-terminus: N-(5'-phosphoribosyl)anthranilate isomerase (211 aa).

Belongs to the TrpF family.

It catalyses the reaction N-(5-phospho-beta-D-ribosyl)anthranilate = 1-(2-carboxyphenylamino)-1-deoxy-D-ribulose 5-phosphate. Its pathway is amino-acid biosynthesis; L-tryptophan biosynthesis; L-tryptophan from chorismate: step 3/5. This Zymomonas mobilis subsp. mobilis (strain ATCC 31821 / ZM4 / CP4) protein is N-(5'-phosphoribosyl)anthranilate isomerase.